The chain runs to 30 residues: Rothein 3.4 (30 aa).

L30 is modified (leucine amide).

Belongs to the frog skin active peptide (FSAP) family. Rothein subfamily. As to expression, expressed by the skin dorsal glands.

The protein resides in the secreted. Its function is as follows. Lacks antimicrobial activity. Does not inhibit the formation of NO by neuronal nitric oxide. In Litoria rothii (Roth's tree frog), this protein is Rothein 3.4.